We begin with the raw amino-acid sequence, 508 residues long: Photosystem II CP47 reaction center protein (508 aa).

6 helical membrane-spanning segments follow: residues 21 to 36 (SVHI…WAGS), 101 to 115 (IVFS…IWHW), 140 to 156 (GIHL…FGAF), 203 to 218 (IAAG…FHLS), 237 to 252 (VLSS…AFVV), and 457 to 472 (SFAL…HGAR).

It belongs to the PsbB/PsbC family. PsbB subfamily. In terms of assembly, PSII is composed of 1 copy each of membrane proteins PsbA, PsbB, PsbC, PsbD, PsbE, PsbF, PsbH, PsbI, PsbJ, PsbK, PsbL, PsbM, PsbT, PsbX, PsbY, PsbZ, Psb30/Ycf12, at least 3 peripheral proteins of the oxygen-evolving complex and a large number of cofactors. It forms dimeric complexes. It depends on Binds multiple chlorophylls. PSII binds additional chlorophylls, carotenoids and specific lipids. as a cofactor.

Its subcellular location is the plastid. It is found in the chloroplast thylakoid membrane. In terms of biological role, one of the components of the core complex of photosystem II (PSII). It binds chlorophyll and helps catalyze the primary light-induced photochemical processes of PSII. PSII is a light-driven water:plastoquinone oxidoreductase, using light energy to abstract electrons from H(2)O, generating O(2) and a proton gradient subsequently used for ATP formation. This chain is Photosystem II CP47 reaction center protein, found in Barbarea verna (Land cress).